A 270-amino-acid polypeptide reads, in one-letter code: uncharacterized protein (270 aa).

Positions 1 to 23 are cleaved as a signal peptide; that stretch reads MFNFITFILFAVVCISYCHKSRG. 2 N-linked (GlcNAc...) asparagine glycosylation sites follow: N246 and N252.

It localises to the secreted. This is an uncharacterized protein from Caenorhabditis elegans.